The sequence spans 177 residues: MSETDAAATLPADARDAFKSPIGPVYTDAAALLADATPPIIAVGDVVTYHLVDAGQTPAVAVVDGRTERDAVRPAVRDAIPEPDLTVASEPGTVSVSLVRALVDAIADADATVVSVDGEEDLAVVPAVLAAPADATVVYGQPGEGMVRVPVTDAGRAEMRERADRLETTAAFWRLVD.

Aspartate 45, valine 46, valine 47, aspartate 64, and glutamate 120 together coordinate GTP.

It belongs to the GTP-dependent DPCK family.

It catalyses the reaction 3'-dephospho-CoA + GTP = GDP + CoA + H(+). Its pathway is cofactor biosynthesis; coenzyme A biosynthesis. Its function is as follows. Catalyzes the GTP-dependent phosphorylation of the 3'-hydroxyl group of dephosphocoenzyme A to form coenzyme A (CoA). The polypeptide is GTP-dependent dephospho-CoA kinase (Halobacterium salinarum (strain ATCC 29341 / DSM 671 / R1)).